A 65-amino-acid polypeptide reads, in one-letter code: MPKIKTVRGAAKRFKKTAGGGFKRKHANLRHILTKKSTKRKRHLRPKSQVSKGDLGLVVACLPYA.

This sequence belongs to the bacterial ribosomal protein bL35 family.

The chain is Large ribosomal subunit protein bL35 from Edwardsiella ictaluri (strain 93-146).